Here is a 474-residue protein sequence, read N- to C-terminus: Gamma-aminobutyric acid receptor subunit beta-1 (474 aa).

A signal peptide spans 1 to 25 (MWTVQNRESLGLLSFPVMIAMVCCA). Residues 26–245 (HSANEPSNMS…SFRLKRNIGY (220 aa)) are Extracellular-facing. Residues Asn-33 and Asn-105 are each glycosylated (N-linked (GlcNAc...) asparagine). Tyr-122 is a histamine binding site. A disulfide bridge connects residues Cys-161 and Cys-175. N-linked (GlcNAc...) asparagine glycosylation occurs at Asn-174. Residues 181–182 (SY) and Thr-227 contribute to the histamine site. Residues Tyr-182 and Thr-227 each coordinate 4-aminobutanoate. The next 3 helical transmembrane spans lie at 246–267 (FILQ…SFWI), 271–293 (ASAA…STHL), and 305–327 (AIDI…YAFV). Residues 328–451 (NYIFFGKGPQ…DLTDVNSIDK (124 aa)) are Cytoplasmic-facing. Residues 452-473 (WSRMFFPITFSLFNVVYWLYYV) traverse the membrane as a helical segment.

This sequence belongs to the ligand-gated ion channel (TC 1.A.9) family. Gamma-aminobutyric acid receptor (TC 1.A.9.5) subfamily. GABRB1 sub-subfamily. As to quaternary structure, heteropentamer, formed by a combination of alpha (GABRA1-6), beta (GABRB1-3), gamma (GABRG1-3), delta (GABRD), epsilon (GABRE), rho (GABRR1-3), pi (GABRP) and theta (GABRQ) chains, each subunit exhibiting distinct physiological and pharmacological properties. Binds UBQLN1.

It localises to the postsynaptic cell membrane. The protein resides in the cell membrane. The catalysed reaction is chloride(in) = chloride(out). With respect to regulation, potentiated by histamine. Functionally, beta subunit of the heteropentameric ligand-gated chloride channel gated by gamma-aminobutyric acid (GABA), a major inhibitory neurotransmitter in the brain. GABA-gated chloride channels, also named GABA(A) receptors (GABAAR), consist of five subunits arranged around a central pore and contain GABA active binding site(s) located at the alpha and beta subunit interface(s). When activated by GABA, GABAARs selectively allow the flow of chloride anions across the cell membrane down their electrochemical gradient. Chloride influx into the postsynaptic neuron following GABAAR opening decreases the neuron ability to generate a new action potential, thereby reducing nerve transmission. Beta-containing GABAARs can simultaneously bind GABA and histamine where histamine binds at the interface of two neighboring beta subunits, which may be involved in the regulation of sleep and wakefulness. The protein is Gamma-aminobutyric acid receptor subunit beta-1 (GABRB1) of Bos taurus (Bovine).